A 185-amino-acid polypeptide reads, in one-letter code: Bcl-2-like protein 10 (185 aa).

A BH1 motif is present at residues L76–G95. The short motif at W138–C149 is the BH2 element. The chain crosses the membrane as a helical span at residues F160 to W182.

Belongs to the Bcl-2 family. Interacts with BAX. Interacts with BCL2, BCL2L1/BCLX. Interacts with APAF1. Interacts with ITPR1, ITPR2 and ITPR3; the interaction with ITPR1 is increased in the presence of AHCLY1. Interacts with AHCYL1. Interacts with HIP1R (via ENTH and I/LWEQ domains). Interacts with CASP9. Interacts with BCL2L11/BIM. Interacts with BIK. Interacts with UBQLN4. Interacts with NME2/NM23-H2. Interacts with and PMAIP1/NOXA. Interacts with TPX2. Interacts with UBQLN1; in the cytoplasm. Interacts (via BH1 domain) with BECN1. Ca(2+) serves as cofactor. Post-translationally, monoubiquitinated by UBQLN1; results in stabilization of BCL2L10 protein abundance and in relocalization from mitochondria to cytoplasm. As to expression, expressed in oligodendroglial lineage cells.

Its subcellular location is the mitochondrion. The protein localises to the nucleus membrane. The protein resides in the endoplasmic reticulum. It localises to the cytoplasm. It is found in the cytoskeleton. Its subcellular location is the spindle. Functionally, promotes cell survival by suppressing apoptosis induced by BAX but not BAK. Increases binding of AHCYL1/IRBIT to ITPR1. Reduces ITPR1-mediated calcium release from the endoplasmic reticulum cooperatively with AHCYL1/IRBIT under normal cellular conditions. Under apoptotic stress conditions, dissociates from ITPR1 and is displaced from mitochondria-associated endoplasmic reticulum membranes, leading to increased Ca(2+) transfer to mitochondria which promotes apoptosis. Required for the correct formation of the microtubule organizing center during oocyte cell division, potentially via regulation of protein abundance and localization of other microtubule organizing center components such as AURKA and TPX2. The protein is Bcl-2-like protein 10 of Rattus norvegicus (Rat).